The primary structure comprises 731 residues: E3 ubiquitin-protein ligase SMURF1 (731 aa).

Residues 1-120 form the C2 domain; sequence MSNVVTRRGG…TGYQRLDLCK (120 aa). The interval 210–235 is disordered; it reads RVRGPEVREHVQTPQNRSHGFQSQDL. Positions 221-234 are enriched in polar residues; the sequence is QTPQNRSHGFQSQD. WW domains are found at residues 233–266 and 279–312; these read QDLPEGYEQRTTVQGQVYFLHTQTGVSTWHDPRI and GSLPAGWEVRTTVSGRIYFVDHNNRTTQFTDPRL. The HECT domain occupies 394–731; sequence RPKDLKKRLM…VEETSGFAVE (338 aa). Cysteine 699 (glycyl thioester intermediate) is an active-site residue.

The protein resides in the cytoplasm. It localises to the cell membrane. It carries out the reaction S-ubiquitinyl-[E2 ubiquitin-conjugating enzyme]-L-cysteine + [acceptor protein]-L-lysine = [E2 ubiquitin-conjugating enzyme]-L-cysteine + N(6)-ubiquitinyl-[acceptor protein]-L-lysine.. It participates in protein modification; protein ubiquitination. In terms of biological role, E3 ubiquitin-protein ligase that acts as a negative regulator of BMP signaling pathway. Mediates ubiquitination and degradation of smad1 and smad5, 2 receptor-regulated SMADs specific for the BMP pathway. Promotes ubiquitination and subsequent proteasomal degradation of TRAF family members and rhoa. May play a role in dendrite formation by melanocytes. This is E3 ubiquitin-protein ligase SMURF1 (smurf1) from Xenopus laevis (African clawed frog).